The primary structure comprises 449 residues: Protein CapK (449 aa).

The protein operates within capsule biogenesis; capsule polysaccharide biosynthesis. In terms of biological role, required for the biosynthesis of type 1 capsular polysaccharide. The chain is Protein CapK (capK) from Staphylococcus aureus.